A 244-amino-acid chain; its full sequence is Phosphoadenosine 5'-phosphosulfate reductase (244 aa).

Residue C239 is the Nucleophile; cysteine thiosulfonate intermediate of the active site.

This sequence belongs to the PAPS reductase family. CysH subfamily.

The protein resides in the cytoplasm. It carries out the reaction [thioredoxin]-disulfide + sulfite + adenosine 3',5'-bisphosphate + 2 H(+) = [thioredoxin]-dithiol + 3'-phosphoadenylyl sulfate. It functions in the pathway sulfur metabolism; hydrogen sulfide biosynthesis; sulfite from sulfate: step 3/3. Functionally, catalyzes the formation of sulfite from phosphoadenosine 5'-phosphosulfate (PAPS) using thioredoxin as an electron donor. This chain is Phosphoadenosine 5'-phosphosulfate reductase, found in Salmonella newport (strain SL254).